The chain runs to 550 residues: Thioredoxin domain-containing protein 2 (550 aa).

A disordered region spans residues 1 to 50; the sequence is MFKKNQKLSKDKGLEVNSVQAGAPEESDVKLNNGGKANERGSNEFLDTAQ. 2 positions are modified to phosphoserine: serine 42 and serine 51. Positions 63–428 are disordered; the sequence is MLHMSTEESE…IKSSEDVQPS (366 aa). 3 stretches are compositionally biased toward polar residues: residues 73–87, 96–105, and 112–140; these read PPQQVSSTSMFSENT, PKSSTKNTQL, and KTSSYSKQTNSSNIPKSLAITTYPKQGST. A run of 22 repeats spans residues 104 to 118, 119 to 133, 134 to 148, 149 to 163, 164 to 178, 179 to 193, 194 to 208, 209 to 223, 224 to 238, 239 to 252, 253 to 267, 268 to 282, 283 to 297, 298 to 312, 313 to 327, 328 to 342, 343 to 357, 358 to 384, 385 to 399, 400 to 412, 413 to 425, and 426 to 440. The segment at 104–440 is 22 X 15 AA approximate tandem repeat of Q-P-K-X-G-D-I-P-K-S-[PS]-E-[KE]-X-I; it reads QLKQEDISKT…EIFPFEAEIE (337 aa). Composition is skewed to basic and acidic residues over residues 148–205, 217–259, 277–304, and 313–348; these read THDR…KSLE, KSSE…ESET, QVKDSMKSKESKIRKPLKDSIQSKENKI, and QPKEGKIHKPLKDSLPSKEGDISKPSEDTIQAKEEI. The residue at position 158 (serine 158) is a Phosphoserine. Phosphoserine occurs at positions 351 and 379. One can recognise a Thioredoxin domain in the interval 401–550; the sequence is KEEITVSPED…KLEKSIAELK (150 aa). Residue serine 407 is modified to Phosphoserine. Cysteine 477 and cysteine 480 form a disulfide bridge.

Testis-specific. Strongly expressed in the testicular seminiferous tubules, mostly in the round spermatids.

Its subcellular location is the cytoplasm. Its function is as follows. Probably plays a regulatory role in sperm development. May participate in regulation of fibrous sheath (FS) assembly by supporting the formation of disulfide bonds during sperm tail morphogenesis. May also be required to rectify incorrect disulfide pairing and generate suitable pairs between the FS constituents. Can reduce disulfide bonds in vitro in the presence of NADP and thioredoxin reductase. In Rattus norvegicus (Rat), this protein is Thioredoxin domain-containing protein 2 (Txndc2).